The sequence spans 163 residues: Single-stranded DNA-binding protein 2 (163 aa).

The region spanning 1–104 (MINNVVLVGR…VVADNFQMLE (104 aa)) is the SSB domain. Positions 109 to 163 (REGGSTGSFNGGFNNNTSSSNSYSAPAQQTPNFGRDDSPFGNSNPMDISDDDLPF) are disordered. Over residues 119–130 (GGFNNNTSSSNS) the composition is skewed to low complexity. Over residues 131-140 (YSAPAQQTPN) the composition is skewed to polar residues. The short motif at 158–163 (DDDLPF) is the Important for interaction with partner proteins element.

In terms of assembly, homotetramer.

Functionally, plays an important role in DNA replication, recombination and repair. Binds to ssDNA and to an array of partner proteins to recruit them to their sites of action during DNA metabolism. The polypeptide is Single-stranded DNA-binding protein 2 (ssb2) (Streptococcus pyogenes serotype M18 (strain MGAS8232)).